Here is a 431-residue protein sequence, read N- to C-terminus: Saglin (431 aa).

Positions Met1–Gly39 are cleaved as a signal peptide. The N-linked (GlcNAc...) asparagine glycan is linked to Asn95. Residues Leu120–Ser169 are a coiled coil.

Homodimer; disulfide-linked. As to quaternary structure, (Microbial infection) Interacts with Plasmodium berghei TRAP (via integrin-like A-domain); the interaction probably promotes sporozoite invasion of salivary gland. Female saliva (at protein level). Female salivary gland (at protein level).

The protein resides in the secreted. In terms of biological role, (Microbial infection) Facilitates invasion of mosquito salivary glands by Plasmodium yoelii sporozoites. Functionally, (Microbial infection) Facilitates invasion of mosquito salivary glands by Plasmodium falciparum sporozoites. Its function is as follows. (Microbial infection) Probably facilitates invasion of mosquito salivary glands by Plasmodium berghei sporozoites. The protein is Saglin of Anopheles gambiae (African malaria mosquito).